Reading from the N-terminus, the 664-residue chain is Chaperone protein dnaK1 (664 aa).

Thr-198 is modified (phosphothreonine; by autocatalysis).

It belongs to the heat shock protein 70 family.

In terms of biological role, acts as a chaperone. This Prochlorococcus marinus (strain MIT 9313) protein is Chaperone protein dnaK1 (dnaK1).